Here is a 297-residue protein sequence, read N- to C-terminus: Large ribosomal subunit protein uL24m (297 aa).

Serine 2 is modified (N-acetylserine). The 34-residue stretch at 63–96 (FIPGDRVVVMSGASKGNIAVIKSFDKRTNSFILD) folds into the KOW domain.

The protein belongs to the universal ribosomal protein uL24 family. Component of the mitochondrial large ribosomal subunit (mt-LSU). Mature yeast 74S mitochondrial ribosomes consist of a small (37S) and a large (54S) subunit. The 37S small subunit contains a 15S ribosomal RNA (15S mt-rRNA) and 34 different proteins. The 54S large subunit contains a 21S rRNA (21S mt-rRNA) and 46 different proteins. uL24m forms the wall of the exit tunnel.

Its subcellular location is the mitochondrion. Functionally, component of the mitochondrial ribosome (mitoribosome), a dedicated translation machinery responsible for the synthesis of mitochondrial genome-encoded proteins, including at least some of the essential transmembrane subunits of the mitochondrial respiratory chain. The mitoribosomes are attached to the mitochondrial inner membrane and translation products are cotranslationally integrated into the membrane. The protein is Large ribosomal subunit protein uL24m (MRPL40) of Saccharomyces cerevisiae (strain ATCC 204508 / S288c) (Baker's yeast).